Consider the following 268-residue polypeptide: MSVSETIVLVGWGAIGKRVADLLAERKSSVRIGAVAVRDRSASRDRLPAGAVLIENPAELAASGASLVVEAAGRPSVLPWGEAALSTGMDFAVSSTSAFVDDALFQRLKDAAAASGAKLIIPPGALGGIDALSAASRLSIESVEHRIIKPAKAWAGTQAAQLVPLDEISEATVFFTDTARKAADAFPQNANVAVITSLAGIGLDRTRVTLVADPAARLNTHEIIAEGDFGRMHLRFENGPLATNPKSSEMTALNLVRAIENRVATTVI.

NAD(+)-binding residues include A125 and N191. The active site involves H221.

It belongs to the L-aspartate dehydrogenase family.

It carries out the reaction L-aspartate + NADP(+) + H2O = oxaloacetate + NH4(+) + NADPH + H(+). The catalysed reaction is L-aspartate + NAD(+) + H2O = oxaloacetate + NH4(+) + NADH + H(+). It functions in the pathway cofactor biosynthesis; NAD(+) biosynthesis; iminoaspartate from L-aspartate (dehydrogenase route): step 1/1. In terms of biological role, specifically catalyzes the NAD or NADP-dependent dehydrogenation of L-aspartate to iminoaspartate. The chain is L-aspartate dehydrogenase from Brucella anthropi (strain ATCC 49188 / DSM 6882 / CCUG 24695 / JCM 21032 / LMG 3331 / NBRC 15819 / NCTC 12168 / Alc 37) (Ochrobactrum anthropi).